We begin with the raw amino-acid sequence, 353 residues long: Soluble interferon alpha/beta receptor OPG204 (353 aa).

The signal sequence occupies residues 1-21 (MTMKMMVHIYFVSLSLLLLLF). Ig-like C2-type domains lie at 67-139 (LGEP…KNGD) and 157-239 (PKTY…IVVS). 2 disulfide bridges follow: cysteine 75-cysteine 131 and cysteine 174-cysteine 223. N-linked (GlcNAc...) asparagine; by host glycans are attached at residues asparagine 119, asparagine 184, asparagine 263, asparagine 271, and asparagine 323. An Ig-like V-type domain is found at 248–347 (PSQDHRFKLI…HNYYFEKTLT (100 aa)). Cysteine 274 and cysteine 335 are disulfide-bonded.

It belongs to the interleukin-1 receptor family. As to quaternary structure, interacts with host IFNA1.

The protein localises to the secreted. In terms of biological role, counteracts the antiviral effects of host IFN-alpha/beta and key IFN-inducible proteins involved in viral RNA degradation suxh as host OAS1. Acts as a soluble IFN-alpha receptor and thus inhibits the interaction between host IFN-alpha and its receptor. This Homo sapiens (Human) protein is Soluble interferon alpha/beta receptor OPG204 (OPG204).